The following is a 382-amino-acid chain: Galactokinase (382 aa).

Position 34-37 (Glu-34–Asp-37) interacts with substrate. Gly-124 to Ser-130 contacts ATP. Positions 130 and 162 each coordinate Mg(2+). The Proton acceptor role is filled by Asp-174. Tyr-223 contacts substrate.

Belongs to the GHMP kinase family. GalK subfamily.

Its subcellular location is the cytoplasm. The enzyme catalyses alpha-D-galactose + ATP = alpha-D-galactose 1-phosphate + ADP + H(+). It participates in carbohydrate metabolism; galactose metabolism. Catalyzes the transfer of the gamma-phosphate of ATP to D-galactose to form alpha-D-galactose-1-phosphate (Gal-1-P). This Shigella boydii serotype 18 (strain CDC 3083-94 / BS512) protein is Galactokinase.